Here is a 187-residue protein sequence, read N- to C-terminus: MATTADFKNGLVLKVDGKLQQIVEFQHVKPGKGPAFVRTKLKDVVSGKTIDKTWNAGVKVETATVDRRDMTYLYNDGTSFVLMDEKTYDQIELAPHLMGDGAKFLLENTSVQVSFHEGEPLFAELPVSVELKIEHTDPGLQGDRSTGGSKPATLETGAEIQVPLFLETGNVVKVDTRTGEYLSRVNN.

This sequence belongs to the elongation factor P family.

The protein localises to the cytoplasm. Its pathway is protein biosynthesis; polypeptide chain elongation. In terms of biological role, involved in peptide bond synthesis. Stimulates efficient translation and peptide-bond synthesis on native or reconstituted 70S ribosomes in vitro. Probably functions indirectly by altering the affinity of the ribosome for aminoacyl-tRNA, thus increasing their reactivity as acceptors for peptidyl transferase. This is Elongation factor P from Corynebacterium jeikeium (strain K411).